A 655-amino-acid chain; its full sequence is p-hydroxybenzoic acid efflux pump subunit AaeB (655 aa).

The next 11 membrane-spanning stretches (helical) occupy residues 13 to 33, 38 to 58, 67 to 89, 93 to 112, 121 to 141, 152 to 172, 370 to 390, 407 to 427, 431 to 451, 459 to 479, and 482 to 502; these read FAVK…HFQL, WAVL…GGEP, GFLR…IAMI, LLMI…ISSL, WGLA…EPLL, EIVI…PRSI, LFWL…IAVV, FIYG…VIIP, QSML…GIEV, MGAL…TFHF, and FLDS…VILL.

Belongs to the aromatic acid exporter ArAE (TC 2.A.85) family.

The protein localises to the cell inner membrane. Functionally, forms an efflux pump with AaeA. Could function as a metabolic relief valve, allowing to eliminate certain compounds when they accumulate to high levels in the cell. The chain is p-hydroxybenzoic acid efflux pump subunit AaeB from Escherichia coli O9:H4 (strain HS).